We begin with the raw amino-acid sequence, 595 residues long: Beta-hexosaminidase 1 (595 aa).

A signal peptide spans 1-20 (MRFAYLATLAGSLLAGLAQA). Residue asparagine 313 is glycosylated (N-linked (GlcNAc...) asparagine).

The protein belongs to the glycosyl hydrolase 20 family.

It carries out the reaction Hydrolysis of terminal non-reducing N-acetyl-D-hexosamine residues in N-acetyl-beta-D-hexosaminides.. Functionally, beta-hexosaminidase that shows a broad substrate specificity. This Coccidioides posadasii (strain RMSCC 757 / Silveira) (Valley fever fungus) protein is Beta-hexosaminidase 1.